The following is a 42-amino-acid chain: Cytochrome b559 subunit beta (42 aa).

Residues 17–33 (WLSIHALAVPTVFFLGA) traverse the membrane as a helical segment. His21 is a heme binding site.

It belongs to the PsbE/PsbF family. Heterodimer of an alpha subunit and a beta subunit. PSII is composed of 1 copy each of membrane proteins PsbA, PsbB, PsbC, PsbD, PsbE, PsbF, PsbH, PsbI, PsbJ, PsbK, PsbL, PsbM, PsbT, PsbX, PsbY, PsbZ, Psb30/Ycf12, at least 3 peripheral proteins of the oxygen-evolving complex and a large number of cofactors. It forms dimeric complexes. Heme b serves as cofactor.

The protein resides in the plastid. It is found in the chloroplast thylakoid membrane. Functionally, this b-type cytochrome is tightly associated with the reaction center of photosystem II (PSII). PSII is a light-driven water:plastoquinone oxidoreductase that uses light energy to abstract electrons from H(2)O, generating O(2) and a proton gradient subsequently used for ATP formation. It consists of a core antenna complex that captures photons, and an electron transfer chain that converts photonic excitation into a charge separation. This Tupiella akineta (Green alga) protein is Cytochrome b559 subunit beta.